A 365-amino-acid polypeptide reads, in one-letter code: UDP-N-acetylglucosamine--N-acetylmuramyl-(pentapeptide) pyrophosphoryl-undecaprenol N-acetylglucosamine transferase (365 aa).

UDP-N-acetyl-alpha-D-glucosamine contacts are provided by residues Thr19–Gly21, Asn131, Arg170, Ser201, Ile255, Ala274–Glu279, and Gln300.

It belongs to the glycosyltransferase 28 family. MurG subfamily.

It is found in the cell inner membrane. The catalysed reaction is di-trans,octa-cis-undecaprenyl diphospho-N-acetyl-alpha-D-muramoyl-L-alanyl-D-glutamyl-meso-2,6-diaminopimeloyl-D-alanyl-D-alanine + UDP-N-acetyl-alpha-D-glucosamine = di-trans,octa-cis-undecaprenyl diphospho-[N-acetyl-alpha-D-glucosaminyl-(1-&gt;4)]-N-acetyl-alpha-D-muramoyl-L-alanyl-D-glutamyl-meso-2,6-diaminopimeloyl-D-alanyl-D-alanine + UDP + H(+). It functions in the pathway cell wall biogenesis; peptidoglycan biosynthesis. In terms of biological role, cell wall formation. Catalyzes the transfer of a GlcNAc subunit on undecaprenyl-pyrophosphoryl-MurNAc-pentapeptide (lipid intermediate I) to form undecaprenyl-pyrophosphoryl-MurNAc-(pentapeptide)GlcNAc (lipid intermediate II). This Acinetobacter baumannii (strain AB307-0294) protein is UDP-N-acetylglucosamine--N-acetylmuramyl-(pentapeptide) pyrophosphoryl-undecaprenol N-acetylglucosamine transferase.